Here is a 259-residue protein sequence, read N- to C-terminus: Borneol dehydrogenase, mitochondrial (259 aa).

A mitochondrion-targeting transit peptide spans 1 to 30 (MASTVLRRLEGKVALITGAASGIGESAARL). NAD(+) contacts are provided by residues 21–23 (SGI), aspartate 42, 63–64 (DV), and 90–92 (NAG). Catalysis depends on serine 144, which acts as the Proton donor. 2 residues coordinate substrate: serine 144 and tyrosine 157. NAD(+) is bound by residues tyrosine 157, lysine 161, and threonine 192. Catalysis depends on tyrosine 157, which acts as the Proton acceptor. The Proton donor/acceptor role is filled by lysine 161.

This sequence belongs to the short-chain dehydrogenases/reductases (SDR) family. In terms of tissue distribution, specifically expressed in glandular trichomes of mature flowers.

The protein resides in the mitochondrion. The enzyme catalyses borneol + NAD(+) = camphor + NADH + H(+). Its pathway is secondary metabolite biosynthesis; terpenoid biosynthesis. In terms of biological role, involved in the biosynthesis of monoterpenes natural products related to camphor. Catalyzes the conversion of borneol into camphor. The chain is Borneol dehydrogenase, mitochondrial from Lavandula x intermedia (Lavandin).